The chain runs to 233 residues: 5'-methylthioadenosine/S-adenosylhomocysteine nucleosidase (233 aa).

E12 serves as the catalytic Proton acceptor. Residues G78, I152, and M173–E174 each bind substrate. The active-site Proton donor is the D197.

The protein belongs to the PNP/UDP phosphorylase family. MtnN subfamily. As to quaternary structure, homodimer.

The enzyme catalyses S-adenosyl-L-homocysteine + H2O = S-(5-deoxy-D-ribos-5-yl)-L-homocysteine + adenine. It carries out the reaction S-methyl-5'-thioadenosine + H2O = 5-(methylsulfanyl)-D-ribose + adenine. It catalyses the reaction 5'-deoxyadenosine + H2O = 5-deoxy-D-ribose + adenine. The protein operates within amino-acid biosynthesis; L-methionine biosynthesis via salvage pathway; S-methyl-5-thio-alpha-D-ribose 1-phosphate from S-methyl-5'-thioadenosine (hydrolase route): step 1/2. Catalyzes the irreversible cleavage of the glycosidic bond in both 5'-methylthioadenosine (MTA) and S-adenosylhomocysteine (SAH/AdoHcy) to adenine and the corresponding thioribose, 5'-methylthioribose and S-ribosylhomocysteine, respectively. Also cleaves 5'-deoxyadenosine, a toxic by-product of radical S-adenosylmethionine (SAM) enzymes, into 5-deoxyribose and adenine. Thus, is required for in vivo function of the radical SAM enzymes biotin synthase and lipoic acid synthase, that are inhibited by 5'-deoxyadenosine accumulation. In Sodalis glossinidius (strain morsitans), this protein is 5'-methylthioadenosine/S-adenosylhomocysteine nucleosidase.